Here is a 966-residue protein sequence, read N- to C-terminus: Aminopeptidase N (966 aa).

The Cytoplasmic segment spans residues 1-8; it reads MAKGFYIS. The chain crosses the membrane as a helical; Signal-anchor for type II membrane protein span at residues 9-32; that stretch reads KTLGILGILLGVAAVCTIIALSVV. The interval 33-68 is cytosolic Ser/Thr-rich junction; that stretch reads YAQEKNRNAENSATAPTLPGSTSATTATTTPAVDES. At 33-966 the chain is on the extracellular side; the sequence is YAQEKNRNAE…VFKWFTENSS (934 aa). The segment at 42-64 is disordered; it reads ENSATAPTLPGSTSATTATTTPA. The span at 44–64 shows a compositional bias: low complexity; the sequence is SATAPTLPGSTSATTATTTPA. The metalloprotease stretch occupies residues 69-966; that stretch reads KPWNQYRLPK…VFKWFTENSS (898 aa). N-linked (GlcNAc...) asparagine glycosylation is found at N106, N114, and N128. A Sulfotyrosine modification is found at Y176. Residues N234, N288, N318, and N332 are each glycosylated (N-linked (GlcNAc...) asparagine). Position 351-355 (351-355) interacts with substrate; it reads GAMEN. H387 is a Zn(2+) binding site. E388 serves as the catalytic Proton acceptor. Zn(2+) contacts are provided by H391 and E410. 2 positions are modified to sulfotyrosine: Y418 and Y423. 4 N-linked (GlcNAc...) asparagine glycosylation sites follow: N573, N606, N624, and N734. The cysteines at positions 760 and 767 are disulfide-linked. Residues N784 and N817 are each glycosylated (N-linked (GlcNAc...) asparagine). A disulfide bond links C797 and C833. Y852 bears the Phosphotyrosine mark.

It belongs to the peptidase M1 family. In terms of assembly, homodimer. Interacts with SLC6A19. Zn(2+) serves as cofactor. In terms of processing, N- and O-glycosylated. Sulfated. Post-translationally, may undergo proteolysis and give rise to a soluble form. Expressed in the intestinal brush border (at protein level). Highly expressed in intestinal tract and kidney, present in liver, lymph node, spleen, and brain. Found as well in monocytes, macrophages, dendritic cells, veiled cells and B-cells but not on T-cells and thymocytes.

The protein localises to the cell membrane. It carries out the reaction Release of an N-terminal amino acid, Xaa-|-Yaa- from a peptide, amide or arylamide. Xaa is preferably Ala, but may be most amino acids including Pro (slow action). When a terminal hydrophobic residue is followed by a prolyl residue, the two may be released as an intact Xaa-Pro dipeptide.. In terms of biological role, broad specificity aminopeptidase which plays a role in the final digestion of peptides generated from hydrolysis of proteins by gastric and pancreatic proteases. Also involved in the processing of various peptides including peptide hormones, such as angiotensin III and IV, neuropeptides, and chemokines. May also be involved the cleavage of peptides bound to major histocompatibility complex class II molecules of antigen presenting cells. May have a role in angiogenesis and promote cholesterol crystallization. May have a role in amino acid transport by acting as binding partner of amino acid transporter SLC6A19 and regulating its activity. In Mus musculus (Mouse), this protein is Aminopeptidase N (Anpep).